Consider the following 498-residue polypeptide: Heat stress transcription factor A-3 (498 aa).

The interval 156–180 is disordered; sequence RRRSSPTQQSGLQPGSSGESGLDPE. The segment covering 160–174 has biased composition (polar residues); that stretch reads SPTQQSGLQPGSSGE. A coiled-coil region spans residues 180-235; sequence ELNTLRREKSALLQEVTRLKQEHLQTIEQMSTLNQRLESAEDRQKQMVSFLAKLLQ. The interval 184-234 is hydrophobic repeat HR-A/B; that stretch reads LRREKSALLQEVTRLKQEHLQTIEQMSTLNQRLESAEDRQKQMVSFLAKLL. The Nuclear localization signal motif lies at 258 to 263; the sequence is KRKFLK. The disordered stretch occupies residues 263–291; the sequence is KHVPHGNIDSGESSSQHTGESNLDFSPTS. Residues 272-291 show a composition bias toward polar residues; that stretch reads SGESSSQHTGESNLDFSPTS. The Nuclear export signal motif lies at 309–316; the sequence is LEDGDLNL. Residues 356-382 form a disordered region; sequence LEIPPASGPRGQDPTIGRSKGKNVLSP.

Belongs to the HSF family. Class A subfamily. As to quaternary structure, homotrimer. In terms of processing, exhibits temperature-dependent phosphorylation.

Its subcellular location is the cytoplasm. It is found in the nucleus. In terms of biological role, transcriptional regulator that specifically binds DNA of heat shock promoter elements (HSE). The chain is Heat stress transcription factor A-3 (HSFA3) from Oryza sativa subsp. japonica (Rice).